The following is a 303-amino-acid chain: Oxygen-dependent coproporphyrinogen-III oxidase (303 aa).

Serine 93 provides a ligand contact to substrate. Positions 97 and 107 each coordinate a divalent metal cation. The Proton donor role is filled by histidine 107. Substrate is bound at residue 109-111 (NVR). A divalent metal cation-binding residues include histidine 146 and histidine 176. Positions 241–276 (YVEFNLVYDRGTLFGLQSGGRTESILMSLPPQVRWG) are important for dimerization. 259–261 (GGR) contributes to the substrate binding site.

The protein belongs to the aerobic coproporphyrinogen-III oxidase family. In terms of assembly, homodimer. A divalent metal cation is required as a cofactor.

It is found in the cytoplasm. The enzyme catalyses coproporphyrinogen III + O2 + 2 H(+) = protoporphyrinogen IX + 2 CO2 + 2 H2O. It functions in the pathway porphyrin-containing compound metabolism; protoporphyrin-IX biosynthesis; protoporphyrinogen-IX from coproporphyrinogen-III (O2 route): step 1/1. Involved in the heme biosynthesis. Catalyzes the aerobic oxidative decarboxylation of propionate groups of rings A and B of coproporphyrinogen-III to yield the vinyl groups in protoporphyrinogen-IX. This chain is Oxygen-dependent coproporphyrinogen-III oxidase, found in Pseudomonas putida (strain ATCC 47054 / DSM 6125 / CFBP 8728 / NCIMB 11950 / KT2440).